The following is a 225-amino-acid chain: UPF0758 protein NMCC_1157 (225 aa).

The 123-residue stretch at 102–224 (VLSDPDTVAD…VRSFRQLGLM (123 aa)) folds into the MPN domain. 3 residues coordinate Zn(2+): His173, His175, and Asp186. Residues 173–186 (HNHPGGSPEPSQED) carry the JAMM motif motif.

This sequence belongs to the UPF0758 family.

This chain is UPF0758 protein NMCC_1157, found in Neisseria meningitidis serogroup C (strain 053442).